Here is an 862-residue protein sequence, read N- to C-terminus: Kinesin-like protein KIN-7J (862 aa).

One can recognise a Kinesin motor domain in the interval 9–331 (RIVVSVRLRP…LLFANCAKDV (323 aa)). 95–102 (GQTSSGKT) lines the ATP pocket. Positions 340–415 (VMSDKALVKH…NFRKVASDGD (76 aa)) form a coiled coil. Basic and acidic residues-rich tracts occupy residues 475-499 (EEHE…KEVQ) and 518-531 (PEKK…KHSE). Disordered regions lie at residues 475-532 (EEHE…HSES) and 596-643 (DDSA…STCN). Positions 598 to 610 (SASTTPSSETFRY) are enriched in polar residues. Basic and acidic residues predominate over residues 613–629 (RRPEKVRKSLSPDEIAD).

It belongs to the TRAFAC class myosin-kinesin ATPase superfamily. Kinesin family. KIN-7 subfamily.

The sequence is that of Kinesin-like protein KIN-7J from Oryza sativa subsp. japonica (Rice).